Consider the following 89-residue polypeptide: Small ribosomal subunit protein uS15 (89 aa).

The protein belongs to the universal ribosomal protein uS15 family. In terms of assembly, part of the 30S ribosomal subunit. Forms a bridge to the 50S subunit in the 70S ribosome, contacting the 23S rRNA.

In terms of biological role, one of the primary rRNA binding proteins, it binds directly to 16S rRNA where it helps nucleate assembly of the platform of the 30S subunit by binding and bridging several RNA helices of the 16S rRNA. Functionally, forms an intersubunit bridge (bridge B4) with the 23S rRNA of the 50S subunit in the ribosome. The chain is Small ribosomal subunit protein uS15 from Prosthecochloris aestuarii (strain DSM 271 / SK 413).